The chain runs to 815 residues: Cell division control protein 53 (815 aa).

Residues 9 to 280 (DDLEATWNFI…WDDHTKKPLS (272 aa)) are required for interaction with SKP1/CBF3D and F-box protein. The segment at 448–748 (KKATKPEVAS…IEKELNTERQ (301 aa)) is required for interaction with CDC34/UBC3. A Cullin neddylation domain is found at 746–807 (ERQIFLEACI…QKGYLQRGDD (62 aa)). Lys760 is covalently cross-linked (Glycyl lysine isopeptide (Lys-Gly) (interchain with G-Cter in NEDD8)).

Belongs to the cullin family. As to quaternary structure, component of multiple SCF (SKP1-CUL1-F-box) E3 ubiquitin-protein ligase complexes formed of CUL1, SKP1/HRT1, RBX1 and a variable F-box domain-containing protein as substrate-specific adapter. Component of the SCF(CDC4) complex containing CDC4. Component of the SCF(MET30) complex containing MET30. Component of the SCF(GRR1) complex containing GRR1. Component of the probable SCF(DIA2) complex containing DIA2. Component of the probable SCF(YDR131C) complex containing YDR131C. Component of the probable SCF(YDR306C) complex containing YDR306C. Component of the probable SCF(YLR224W) complex containing YLR224W. Component of the probable SCF(YJL149W) complex containing YJL149W. Component of the probable SCF(YNL311C) complex containing YNL311C. Component of the probable SCF(MDM30) complex containing MDM30. Component of the probable SCF(UFO1) complex containing UFO1. Component of the probable SCF(HRT3) complex containing HRT3. Component of the probable SCF(YBR280C) complex containing YBR280C. Component of the probable SCF(YBR352W) complex containing YBR352W. Interacts with DCN1, YBR280C, YLR224W and YLR352W. The unneddylated form interacts with LAG2/CAND1 and the interaction mediates the exchange of the F-box substrate-specific subunit. Post-translationally, neddylated; enhancing the ubiquitin-ligase activity.

The protein localises to the cytoplasm. It localises to the nucleus. Functionally, core component of multiple cullin-RING-based SCF (SKP1-CUL1-F-box) E3 ubiquitin-protein ligase complexes which mediate the ubiquitination and subsequent proteasomal degradation of target proteins. As a scaffold protein may contribute to catalysis through positioning of the substrate and the ubiquitin-conjugating enzyme. The SCF complex associates with CDC34 as the E2 ubiquitin-conjugating enzyme. The functional specificity of the SCF complex depends on the type of F-box protein. SCF(CDC4) controls the G1-to-S phase transition; it directs ubiquitination of the phosphorylated CDK inhibitor SIC1 and of CDC6. SCF(CDC4) directs ubiquitination of GCN4. SCF(GRR1) directs ubiquitination of phosphorylated CLN1, CLN2 and GIC2. SCF(MET30) directs ubiquitination of MET4. SCF(DIA2) is specifically involved in the pheromone induced degradation of phosphorylated TEC1. SCF(MDM30) seems to direct ubiquitination of FZ01. Involved in the regulation of methionine biosynthesis genes. This Saccharomyces cerevisiae (strain ATCC 204508 / S288c) (Baker's yeast) protein is Cell division control protein 53 (CDC53).